Reading from the N-terminus, the 171-residue chain is Large ribosomal subunit protein uL10 (171 aa).

It belongs to the universal ribosomal protein uL10 family. In terms of assembly, part of the ribosomal stalk of the 50S ribosomal subunit. The N-terminus interacts with L11 and the large rRNA to form the base of the stalk. The C-terminus forms an elongated spine to which L12 dimers bind in a sequential fashion forming a multimeric L10(L12)X complex.

Forms part of the ribosomal stalk, playing a central role in the interaction of the ribosome with GTP-bound translation factors. In Hyphomonas neptunium (strain ATCC 15444), this protein is Large ribosomal subunit protein uL10.